Reading from the N-terminus, the 577-residue chain is Anthranilate synthase alpha subunit 1, chloroplastic (577 aa).

The transit peptide at 1-34 directs the protein to the chloroplast; that stretch reads MASLVLSLRIAPSTPPLGLGGGRFRGRRGAVACR.

Belongs to the anthranilate synthase component I family. Heterotetramer consisting of two non-identical subunits: a beta subunit and a large alpha subunit.

Its subcellular location is the plastid. It is found in the chloroplast. The enzyme catalyses chorismate + L-glutamine = anthranilate + pyruvate + L-glutamate + H(+). It functions in the pathway amino-acid biosynthesis; L-tryptophan biosynthesis; L-tryptophan from chorismate: step 1/5. Feedback inhibition by tryptophan. Part of a heterotetrameric complex that catalyzes the two-step biosynthesis of anthranilate, an intermediate in the biosynthesis of L-tryptophan. In the first step, the glutamine-binding beta subunit of anthranilate synthase (AS) provides the glutamine amidotransferase activity which generates ammonia as a substrate that, along with chorismate, is used in the second step, catalyzed by the large alpha subunit of AS to produce anthranilate. The chain is Anthranilate synthase alpha subunit 1, chloroplastic from Oryza sativa subsp. japonica (Rice).